The chain runs to 493 residues: Glutamyl-tRNA(Gln) amidotransferase subunit A (493 aa).

Catalysis depends on charge relay system residues lysine 79 and serine 159. Serine 183 (acyl-ester intermediate) is an active-site residue.

It belongs to the amidase family. GatA subfamily. In terms of assembly, heterotrimer of A, B and C subunits.

It carries out the reaction L-glutamyl-tRNA(Gln) + L-glutamine + ATP + H2O = L-glutaminyl-tRNA(Gln) + L-glutamate + ADP + phosphate + H(+). Functionally, allows the formation of correctly charged Gln-tRNA(Gln) through the transamidation of misacylated Glu-tRNA(Gln) in organisms which lack glutaminyl-tRNA synthetase. The reaction takes place in the presence of glutamine and ATP through an activated gamma-phospho-Glu-tRNA(Gln). The polypeptide is Glutamyl-tRNA(Gln) amidotransferase subunit A (Rhizobium meliloti (strain 1021) (Ensifer meliloti)).